The primary structure comprises 1439 residues: MKQGQGAHLSGQRIGHHPTAQMNPGDGDGNGRHQVASGHASADPELMNLRIRMTNRLIWELLSREPKLQTRPRKLVSDLAKRFEAVIYKKNPNKAAYYSILNGEIFPHLQHALSTHMAQHQQGQQMLQQLTSSSSYGTTIPIPDVVQNASGNTRALYEMDNTSGPMSNGHHHFSANFPLHSTTKGASLEMSAVSMQEGKITHMIPTPGSSNQQSLPGNFHYSTGTGYLNGKSNVMAQMQEQQAPFASKINCCPVQRDLGGYAGSGVHSDILNNSSPYGVSEAHMIDGMGLHRSNVQVINRTVVPETFINPSPYGISPNKPLQRHVNPSTRSTPTPADIAASTSFNGTGSSALSTTSYLDMTTVNSLPKSRMDSGLIMSQPTIQSFQTEYYIQTEGLDLQEKISLEQLHQQVNQLHLIQPHSQYAQNQCSLKLQQQNSLHHLVMSRGNVLTQCHLGSDHAEKLLDKRNQLHSELVSSQINEHVGLTNLQGHYEQTQYHDNYKKGQMSASSQNLGIPAPHDLLPPQQQFDDGSYRLSCFLKETYTKPLQPHCKSKPMKEVIMTSLLSGKIQDGFCQKKMARDREHHPIISGWHSAGCAATSFGSEEVMENTKQYHAQARWLLFLFHAKSCTSPPGSCKSSYCDRVRELVVHLTDCQIKDCSYRHCRESKMVSDHYKNCINEHCHVCCKAKEMLRRSSELAHKQNPAEPILITQHNMNQRSADRVHGDRMDIDQAVETFDDQPPAAKRPKLQLVSPDASENVPVCQKNPGFMLQEAHPRQLDQNKKMVPDQEVDVGLDIRHPQVTLVSCHGSDEKIGAAQNTVIPGALNKIHCHVQQETVVADKESVTVVDVKKKTGSVDVTISKTGKPKVKGVSLMELFTPEQIHEHINSLRQWIGQWVQCDKCECWQHQICALFNARRNDVEEAEYTCFKCYIEEFKRGLRMPLPESVVRGAKDLPRTLLSDHIEERLFKRLREERQERANKLKTSLDEVPGADGLVVRVVSSVDKKLEVKPHFFKILQEDNYPAEFPYKSKAILLFQKIEGVEVCLFGMYVQEYGAECKFPNQRRVYLSYLDSVKYFRPDIETVSGQALRTYVYHEILIGYLEYYKQRGFTSCYIWACPPVKGEDYILYCHPEIQKTPKSDKLRQWYLSMLQKAIKENIVVELTNLYDQFFVTAKECKIKVSAARLPYFDGDYWPGAAEDIINQLQLEGDGKLLKKGRVNKIITKRALKAAGHTDLSGNASKEAMLMQKLGEIICPIKDDLIMVHLQYSCSHCCTFMVSGRRWVCNECKSFYICDRCYNAEQRLEEKERHPSNSKCLHILHPVEIVGVSEDTKDRDIILENEIFDTRQAFLSFCQGYHYQYDTLRRAKHSTMMMLYHLHNPTGPAFVATCNVCNCDIENGQGWDFKSFERKQNQLSESRRMASVNERVRQRVAEVTRHE.

2 disordered regions span residues 1–43 (MKQG…ASAD) and 313–335 (YGIS…TPTP). Residues 325 to 335 (VNPSTRSTPTP) are compositionally biased toward polar residues. Residues 607–687 (ENTKQYHAQA…NEHCHVCCKA (81 aa)) form a TAZ-type zinc finger. Residues 827-933 (KIHCHVQQET…EYTCFKCYIE (107 aa)) form a PHD-type; degenerate zinc finger. The CBP/p300-type HAT domain occupies 948–1383 (VRGAKDLPRT…MLYHLHNPTG (436 aa)). A coiled-coil region spans residues 964–989 (EERLFKRLREERQERANKLKTSLDEV). Residues 1071 to 1073 (LDS), 1090 to 1091 (RT), and tryptophan 1146 each bind acetyl-CoA. The segment at 1265 to 1328 (HLQYSCSHCC…ILHPVEIVGV (64 aa)) adopts a ZZ-type zinc-finger fold. The Zn(2+) site is built by cysteine 1270, cysteine 1273, cysteine 1285, cysteine 1288, cysteine 1294, cysteine 1297, histidine 1310, and histidine 1318.

It is found in the nucleus. The enzyme catalyses L-lysyl-[protein] + acetyl-CoA = N(6)-acetyl-L-lysyl-[protein] + CoA + H(+). Acetyltransferase enzyme. Acetylates histones, giving a specific tag for transcriptional activation. The polypeptide is Probable histone acetyltransferase HAC-like 2 (Oryza sativa subsp. japonica (Rice)).